We begin with the raw amino-acid sequence, 382 residues long: Pyrimidine monooxygenase RutA (382 aa).

FMN-binding positions include 68 to 69 (IK), Asn134, Glu143, 159 to 160 (RY), and Ser209.

It belongs to the NtaA/SnaA/DszA monooxygenase family. RutA subfamily.

It catalyses the reaction uracil + FMNH2 + NADH + O2 = (Z)-3-ureidoacrylate + FMN + NAD(+) + H2O + H(+). It carries out the reaction thymine + FMNH2 + NADH + O2 = (Z)-2-methylureidoacrylate + FMN + NAD(+) + H2O + H(+). Functionally, catalyzes the pyrimidine ring opening between N-3 and C-4 by an unusual flavin hydroperoxide-catalyzed mechanism, adding oxygen atoms in the process to yield ureidoacrylate peracid, that immediately reacts with FMN forming ureidoacrylate and FMN-N(5)-oxide. The FMN-N(5)-oxide reacts spontaneously with NADH to produce FMN. Requires the flavin reductase RutF to regenerate FMN in vivo. The polypeptide is Pyrimidine monooxygenase RutA (rutA) (Escherichia coli O157:H7).